We begin with the raw amino-acid sequence, 92 residues long: RNA-binding protein Hfq (92 aa).

A Sm domain is found at 11-71 (DRFLNHLRVN…ISTIIPSSYV (61 aa)).

It belongs to the Hfq family. Homohexamer.

Functionally, RNA chaperone that binds small regulatory RNA (sRNAs) and mRNAs to facilitate mRNA translational regulation in response to envelope stress, environmental stress and changes in metabolite concentrations. Also binds with high specificity to tRNAs. The protein is RNA-binding protein Hfq of Thermotoga maritima (strain ATCC 43589 / DSM 3109 / JCM 10099 / NBRC 100826 / MSB8).